The following is a 265-amino-acid chain: Hydroxyacylglutathione hydrolase (265 aa).

H53, H55, D57, H58, H109, D126, and H164 together coordinate Zn(2+).

It belongs to the metallo-beta-lactamase superfamily. Glyoxalase II family. As to quaternary structure, monomer. The cofactor is Zn(2+).

It carries out the reaction an S-(2-hydroxyacyl)glutathione + H2O = a 2-hydroxy carboxylate + glutathione + H(+). It participates in secondary metabolite metabolism; methylglyoxal degradation; (R)-lactate from methylglyoxal: step 2/2. Functionally, thiolesterase that catalyzes the hydrolysis of S-D-lactoyl-glutathione to form glutathione and D-lactic acid. This chain is Hydroxyacylglutathione hydrolase, found in Dechloromonas aromatica (strain RCB).